Here is a 317-residue protein sequence, read N- to C-terminus: Methionyl-tRNA formyltransferase (317 aa).

112-115 is a (6S)-5,6,7,8-tetrahydrofolate binding site; sequence SILP.

It belongs to the Fmt family.

The catalysed reaction is L-methionyl-tRNA(fMet) + (6R)-10-formyltetrahydrofolate = N-formyl-L-methionyl-tRNA(fMet) + (6S)-5,6,7,8-tetrahydrofolate + H(+). Attaches a formyl group to the free amino group of methionyl-tRNA(fMet). The formyl group appears to play a dual role in the initiator identity of N-formylmethionyl-tRNA by promoting its recognition by IF2 and preventing the misappropriation of this tRNA by the elongation apparatus. This Actinobacillus succinogenes (strain ATCC 55618 / DSM 22257 / CCUG 43843 / 130Z) protein is Methionyl-tRNA formyltransferase.